The chain runs to 222 residues: uncharacterized protein (222 aa).

Glycine 2 carries N-myristoyl glycine; by host lipidation.

It belongs to the mimivirus R683/R861 family.

This is an uncharacterized protein from Acanthamoeba polyphaga mimivirus (APMV).